The following is a 334-amino-acid chain: Glycerol-3-phosphate dehydrogenase [NAD(P)+] 2 (334 aa).

NADPH-binding residues include Trp-16, Arg-36, Arg-37, and Lys-110. 2 residues coordinate sn-glycerol 3-phosphate: Lys-110 and Gly-140. Ala-144 contacts NADPH. Sn-glycerol 3-phosphate is bound by residues Lys-195, Asp-248, Ser-258, Arg-259, and Asn-260. Lys-195 acts as the Proton acceptor in catalysis. An NADPH-binding site is contributed by Arg-259. Residues Val-282 and Glu-284 each coordinate NADPH.

This sequence belongs to the NAD-dependent glycerol-3-phosphate dehydrogenase family.

The protein resides in the cytoplasm. The catalysed reaction is sn-glycerol 3-phosphate + NAD(+) = dihydroxyacetone phosphate + NADH + H(+). The enzyme catalyses sn-glycerol 3-phosphate + NADP(+) = dihydroxyacetone phosphate + NADPH + H(+). Its pathway is membrane lipid metabolism; glycerophospholipid metabolism. Functionally, catalyzes the reduction of the glycolytic intermediate dihydroxyacetone phosphate (DHAP) to sn-glycerol 3-phosphate (G3P), the key precursor for phospholipid synthesis. The sequence is that of Glycerol-3-phosphate dehydrogenase [NAD(P)+] 2 from Mycobacterium tuberculosis (strain ATCC 25618 / H37Rv).